A 73-amino-acid polypeptide reads, in one-letter code: Putative ORF9c protein (73 aa).

Residues 47–67 (AAVGELLLLEWLAMAVMLLLL) form a helical membrane-spanning segment.

Its subcellular location is the membrane. Functionally, may induce apoptosis in cardiomyocytes when overexpressed ex-vivo. The protein is Putative ORF9c protein of Homo sapiens (Human).